Consider the following 324-residue polypeptide: Beta-ketoacyl-[acyl-carrier-protein] synthase III (324 aa).

Active-site residues include Cys116 and His251. The ACP-binding stretch occupies residues 252–256; the sequence is QANLR. The active site involves Asn281.

Belongs to the thiolase-like superfamily. FabH family. In terms of assembly, homodimer.

It localises to the cytoplasm. The catalysed reaction is malonyl-[ACP] + acetyl-CoA + H(+) = 3-oxobutanoyl-[ACP] + CO2 + CoA. It functions in the pathway lipid metabolism; fatty acid biosynthesis. Functionally, catalyzes the condensation reaction of fatty acid synthesis by the addition to an acyl acceptor of two carbons from malonyl-ACP. Catalyzes the first condensation reaction which initiates fatty acid synthesis and may therefore play a role in governing the total rate of fatty acid production. Possesses both acetoacetyl-ACP synthase and acetyl transacylase activities. Its substrate specificity determines the biosynthesis of branched-chain and/or straight-chain of fatty acids. In Xylella fastidiosa (strain Temecula1 / ATCC 700964), this protein is Beta-ketoacyl-[acyl-carrier-protein] synthase III.